A 401-amino-acid chain; its full sequence is F-box protein At1g69090 (401 aa).

A disordered region spans residues 1 to 23 (MASPTLALAQSPPPKSPAVSVSQ). The region spanning 27–74 (HCWSKLPLDLMQLVFERLAFLDFERAKSVCSSWQFGSKQSKPNNQIPW) is the F-box domain.

The chain is F-box protein At1g69090 from Arabidopsis thaliana (Mouse-ear cress).